Consider the following 520-residue polypeptide: Keratin, type II cytoskeletal 72 (520 aa).

The segment at 1-133 (MSRQLTLYPG…DPEIQKVRAQ (133 aa)) is head. The interval 134–169 (EREQIKALNNKFASFIDKVRFLEQQNQVLETKWELL) is coil 1A. Positions 134–447 (EREQIKALNN…KLLESEESRM (314 aa)) constitute an IF rod domain. Residues 170-188 (QQLDQNNSRRSLEPVHESY) are linker 1. The coil 1B stretch occupies residues 189–280 (ISNLQKQLEI…VLFEGEIAQM (92 aa)). The linker 12 stretch occupies residues 281 to 304 (QSHISDTSVILSMDNNRQLDLDSI). A coil 2 region spans residues 305 to 443 (LAEVRAQYEE…ATYRKLLESE (139 aa)). The tract at residues 444–520 (ESRMAGEYPS…SSCVSKKASR (77 aa)) is tail. Residues 495-520 (GSCGSELKDPPAKTSASSCVSKKASR) are disordered.

This sequence belongs to the intermediate filament family. Heterotetramer of two type I and two type II keratins.

Its function is as follows. Has a role in hair formation. Specific component of keratin intermediate filaments in the inner root sheath (IRS) of the hair follicle. This Rattus norvegicus (Rat) protein is Keratin, type II cytoskeletal 72 (Krt72).